The following is a 613-amino-acid chain: MPDYEKVIEASGNGRYSKLNTVLGKGAYKVVYKAIDREEAINDNEITNVKVTRQEFKDLGHEIDILKSVRHPNIITFHDAWYNETEFVFITELMTSGTLREYIRKLTPLPNIKIVKRWCRQILKGLAYLHGHEPPIIHRDIKCDNIFINGAHGEIKIGDMGTAEMKNGKKYTVIGTPEFMAPEMYEEQGYNEKVDIYAFGMCLLEMATGEYPYGECTNAVQVFKKVTQTIKPECLSRVQDPELLTLVNICLTPEDERMTAQEILEHRFLAVEPEVVLVSKDMTMKLLTLQVVFKGMDKLSVKFEFNADTDTAADVVAEMIEEQVLQNCYQQLITCEINRILRDIARNQGPPDKGEDEKIVWRRENDIRSELERAKKDLALAVERVFEAEKKCELLEQHNIIAEERCKETIFALEQAKFQIPDLLQPQPQPQPQPQPQPQPQPQFQLQPQLQYLSPQSTTSPGPTSDDNSTNSTMLSSLESELSKLCVSGDEQVETTTHSALMENVLAGKAKYYEYSNDTSIDKFVMDTAGATNRSKDKQKQWAAKLQDQDIMTVGDLRDLHDEDWSGIGLTVFALRALKNMLAGKKAAVTQRGLQGTRSGASTPVEEQEQELM.

The 253-residue stretch at 17–269 (SKLNTVLGKG…AQEILEHRFL (253 aa)) folds into the Protein kinase domain. Residues 23–31 (LGKGAYKVV) and Lys-50 each bind ATP. Asp-140 serves as the catalytic Proton acceptor. Disordered regions lie at residues 424 to 475 (LQPQ…STML) and 589 to 613 (VTQRGLQGTRSGASTPVEEQEQELM). The span at 427–441 (QPQPQPQPQPQPQPQ) shows a compositional bias: pro residues. A compositionally biased stretch (low complexity) spans 442-475 (PQFQLQPQLQYLSPQSTTSPGPTSDDNSTNSTML). Residues 592–602 (RGLQGTRSGAS) are compositionally biased toward polar residues.

It belongs to the protein kinase superfamily. Ser/Thr protein kinase family.

The catalysed reaction is L-seryl-[protein] + ATP = O-phospho-L-seryl-[protein] + ADP + H(+). It catalyses the reaction L-threonyl-[protein] + ATP = O-phospho-L-threonyl-[protein] + ADP + H(+). Serine/threonine protein kinase that probably participates as an intermediate in an intracellular system controlling nuclear proliferation. This Phycomyces blakesleeanus (strain ATCC 8743b / DSM 1359 / FGSC 10004 / NBRC 33097 / NRRL 1555) protein is Serine/threonine-protein kinase pkpA (pkpA).